Reading from the N-terminus, the 319-residue chain is Methionyl-tRNA formyltransferase (319 aa).

113-116 contributes to the (6S)-5,6,7,8-tetrahydrofolate binding site; it reads SLLP.

Belongs to the Fmt family.

The enzyme catalyses L-methionyl-tRNA(fMet) + (6R)-10-formyltetrahydrofolate = N-formyl-L-methionyl-tRNA(fMet) + (6S)-5,6,7,8-tetrahydrofolate + H(+). Functionally, attaches a formyl group to the free amino group of methionyl-tRNA(fMet). The formyl group appears to play a dual role in the initiator identity of N-formylmethionyl-tRNA by promoting its recognition by IF2 and preventing the misappropriation of this tRNA by the elongation apparatus. This is Methionyl-tRNA formyltransferase from Hamiltonella defensa subsp. Acyrthosiphon pisum (strain 5AT).